Reading from the N-terminus, the 185-residue chain is MAETAYVPRLRVEYDKSIRTKLTEQFGYVNVMEVPRLDKVVLNMGIGEAVNDRKKAETAAGDLSLIAGQKALVTYSRVAISTFKLRENQPIGCKVTLRKAKMYEFIDRLINVALPRVRDFRGLNPKSFDGGGNYSLGIKEHIIFPEIDFDKAGESWGMDVTVCTTAQTDDEARALLTAFNFPFRQ.

It belongs to the universal ribosomal protein uL5 family. In terms of assembly, part of the 50S ribosomal subunit; part of the 5S rRNA/L5/L18/L25 subcomplex. Contacts the 5S rRNA and the P site tRNA. Forms a bridge to the 30S subunit in the 70S ribosome.

This is one of the proteins that bind and probably mediate the attachment of the 5S RNA into the large ribosomal subunit, where it forms part of the central protuberance. In the 70S ribosome it contacts protein S13 of the 30S subunit (bridge B1b), connecting the 2 subunits; this bridge is implicated in subunit movement. Contacts the P site tRNA; the 5S rRNA and some of its associated proteins might help stabilize positioning of ribosome-bound tRNAs. This Nitrobacter hamburgensis (strain DSM 10229 / NCIMB 13809 / X14) protein is Large ribosomal subunit protein uL5.